We begin with the raw amino-acid sequence, 304 residues long: Serine protease 30 (304 aa).

The first 21 residues, 1–21 (MESWARCIFLLLLQILTGGRG), serve as a signal peptide directing secretion. Positions 22–30 (DILHSGAGK) are cleaved as a propeptide — activation peptide. The region spanning 31 to 271 (IVGGQDAPEG…YVDWIQRTLA (241 aa)) is the Peptidase S1 domain. Cysteines 57 and 73 form a disulfide. Catalysis depends on histidine 72, which acts as the Charge relay system. The N-linked (GlcNAc...) asparagine glycan is linked to asparagine 79. Residue aspartate 122 is the Charge relay system of the active site. 3 disulfides stabilise this stretch: cysteine 155-cysteine 229, cysteine 185-cysteine 208, and cysteine 219-cysteine 247. Residue serine 223 is the Charge relay system of the active site. N-linked (GlcNAc...) asparagine glycans are attached at residues asparagine 232 and asparagine 273. The GPI-anchor amidated serine moiety is linked to residue serine 275. The propeptide at 276–304 (DAYGCRSRASGAYPALLLVLLAFALPESL) is removed in mature form.

This sequence belongs to the peptidase S1 family. As to expression, expressed predominantly in kidney, small intestine and stomach and moderately in thymus, lung, spleen, testis and skin. In the kidney, expressed mainly in collecting duct of renal medulla and cortex.

It is found in the cell membrane. With respect to regulation, inhibited by aprotinin, leupeptin, benzamidine and soybean trypsin inhibitor. Partially inhibited by PMSF and DFP. In terms of biological role, selectively cleaves synthetic peptide substrates of trypsin. Activates the epithelial sodium channel ENaC. The polypeptide is Serine protease 30 (Prss30) (Rattus norvegicus (Rat)).